The primary structure comprises 265 residues: ATP synthase subunit a (265 aa).

Transmembrane regions (helical) follow at residues 26 to 46, 88 to 108, 132 to 152, 168 to 188, 195 to 217, and 231 to 251; these read VHLD…FFFY, IGSL…IDLI, DISA…FYTI, PFNH…TLLA, FRLF…MYMA, and LIWA…FMML.

The protein belongs to the ATPase A chain family. As to quaternary structure, F-type ATPases have 2 components, CF(1) - the catalytic core - and CF(0) - the membrane proton channel. CF(1) has five subunits: alpha(3), beta(3), gamma(1), delta(1), epsilon(1). CF(0) has three main subunits: a(1), b(2) and c(9-12). The alpha and beta chains form an alternating ring which encloses part of the gamma chain. CF(1) is attached to CF(0) by a central stalk formed by the gamma and epsilon chains, while a peripheral stalk is formed by the delta and b chains.

The protein localises to the cell inner membrane. Its function is as follows. Key component of the proton channel; it plays a direct role in the translocation of protons across the membrane. This chain is ATP synthase subunit a, found in Histophilus somni (strain 129Pt) (Haemophilus somnus).